We begin with the raw amino-acid sequence, 202 residues long: Dephospho-CoA kinase (202 aa).

Positions 6–202 constitute a DPCK domain; the sequence is KVSITGDLSS…EYFYALKGAL (197 aa). ATP is bound at residue 14-19; that stretch reads SSGKTE.

Belongs to the CoaE family.

The protein localises to the cytoplasm. It catalyses the reaction 3'-dephospho-CoA + ATP = ADP + CoA + H(+). It functions in the pathway cofactor biosynthesis; coenzyme A biosynthesis; CoA from (R)-pantothenate: step 5/5. Functionally, catalyzes the phosphorylation of the 3'-hydroxyl group of dephosphocoenzyme A to form coenzyme A. This chain is Dephospho-CoA kinase, found in Chlamydia abortus (strain DSM 27085 / S26/3) (Chlamydophila abortus).